The chain runs to 214 residues: Osteoclast-stimulating factor 1 (214 aa).

The residue at position 2 (Ser2) is an N-acetylserine. The SH3 domain maps to 12 to 71 (GQVKVFRALYTFEPRTPDELYFEEGDIIYITDMSDTNWWKGTSKGRTGLIPSNYVAEQAE). ANK repeat units lie at residues 72-101 (SIDNPLHEAAKRGNLSWLRECLDNRVGVNG), 105-135 (AGSTALYWACHGGHKDIVDMLFTQPNIELNQ), and 139-168 (LGDTALHAAAWKGYADIVQLLLAKGARTDL). Position 200 is a phosphothreonine (Thr200). Ser202 and Ser213 each carry phosphoserine.

In terms of assembly, interacts with SRC and SMN1. Interacts with FASLG.

It is found in the cytoplasm. Its function is as follows. Induces bone resorption, acting probably through a signaling cascade which results in the secretion of factor(s) enhancing osteoclast formation and activity. This chain is Osteoclast-stimulating factor 1 (OSTF1), found in Sus scrofa (Pig).